Here is a 497-residue protein sequence, read N- to C-terminus: 4,4'-diaponeurosporene oxygenase (497 aa).

7–19 contacts FAD; that stretch reads VIGGGLGGISAAI.

It belongs to the carotenoid/retinoid oxidoreductase family. CrtP subfamily. The cofactor is FAD.

It carries out the reaction all-trans-4,4'-diaponeurosporene + 2 AH2 + 2 O2 = 4,4'-diaponeurosporenal + 2 A + 3 H2O. It participates in carotenoid biosynthesis; staphyloxanthin biosynthesis; staphyloxanthin from farnesyl diphosphate: step 3/5. Involved in the biosynthesis of the yellow-orange carotenoid staphyloxanthin, which plays a role in the virulence via its protective function against oxidative stress. Catalyzes the oxidation of the terminal methyl side group of 4,4'-diaponeurosporene to form 4,4'-diaponeurosporen-4-al. This is 4,4'-diaponeurosporene oxygenase from Staphylococcus aureus (strain USA300).